The chain runs to 682 residues: Methionine--tRNA ligase (682 aa).

Positions 14 to 24 (PYANGSIHLGH) match the 'HIGH' region motif. Zn(2+) contacts are provided by cysteine 145, cysteine 148, cysteine 158, and cysteine 161. Residues 331-335 (KMSKS) carry the 'KMSKS' region motif. An ATP-binding site is contributed by lysine 334. Residues 580–682 (AFAAVDLRVA…SGAKPGQRIK (103 aa)) enclose the tRNA-binding domain.

This sequence belongs to the class-I aminoacyl-tRNA synthetase family. MetG type 1 subfamily. In terms of assembly, homodimer. The cofactor is Zn(2+).

Its subcellular location is the cytoplasm. The enzyme catalyses tRNA(Met) + L-methionine + ATP = L-methionyl-tRNA(Met) + AMP + diphosphate. In terms of biological role, is required not only for elongation of protein synthesis but also for the initiation of all mRNA translation through initiator tRNA(fMet) aminoacylation. The sequence is that of Methionine--tRNA ligase from Pseudomonas savastanoi pv. phaseolicola (strain 1448A / Race 6) (Pseudomonas syringae pv. phaseolicola (strain 1448A / Race 6)).